The sequence spans 239 residues: Uridylate kinase (239 aa).

An ATP-binding site is contributed by 10 to 13 (KLSG). Position 53 (G53) interacts with UMP. 2 residues coordinate ATP: G54 and R58. Residues D73 and 135 to 142 (TGRPYFTT) each bind UMP. 3 residues coordinate ATP: N163, Y169, and D172.

It belongs to the UMP kinase family. As to quaternary structure, homohexamer.

It localises to the cytoplasm. The enzyme catalyses UMP + ATP = UDP + ADP. It participates in pyrimidine metabolism; CTP biosynthesis via de novo pathway; UDP from UMP (UMPK route): step 1/1. Inhibited by UTP. In terms of biological role, catalyzes the reversible phosphorylation of UMP to UDP. The protein is Uridylate kinase of Mycoplasmopsis synoviae (strain 53) (Mycoplasma synoviae).